A 207-amino-acid polypeptide reads, in one-letter code: MTGIPSIVPYALPTSRDLPANLAQWHIDPERAVLLVHDMQRYFLRPLPDALRDQVVGNAARIRQWAADNGVPVAYTAQPGSMNEEQRGLLKDFWGPGMKASPTDREVVDALAPQPGDWLLTKWRYSAFFNSDLLQRLHASGRDQLILCGVYAHVGVLISSVDAYSNDIQPFLVADAIADFSKEHHWMAMEYAASRCAMVITTDEVVL.

The Proton donor role is filled by D38. Substrate is bound by residues Q78, R87, K122, and 151-155 (YAHVG).

It belongs to the isochorismatase family. As to quaternary structure, homodimer.

The catalysed reaction is (2S)-2-amino-4-deoxychorismate + H2O = (5S,6S)-6-amino-5-hydroxycyclohexa-1,3-diene-1-carboxyate + pyruvate. It participates in antibiotic biosynthesis; phenazine biosynthesis. Functionally, involved in the biosynthesis of the antibiotic phenazine, a nitrogen-containing heterocyclic molecule having important roles in virulence, competition and biological control. Catalyzes the hydrolysis of the vinyl ether functional group of 2-amino-2-deoxyisochorismate (ADIC), yielding pyruvate and trans-2,3-dihydro-3-hydroxyanthranilic acid (DHHA). The protein is Phenazine biosynthesis protein PhzD of Pseudomonas fluorescens.